Consider the following 341-residue polypeptide: Queuosine 5'-phosphate N-glycosylase/hydrolase (341 aa).

Methionine 1 bears the N-acetylmethionine mark. 6 residues coordinate queuine: histidine 53, phenylalanine 237, aspartate 239, aspartate 314, tyrosine 315, and aspartate 319. The Nucleophile or transition state stabilizer role is filled by aspartate 239.

Belongs to the QNG1 protein family.

It carries out the reaction queuosine 5'-phosphate + H2O = queuine + D-ribose 5-phosphate. Catalyzes the hydrolysis of queuosine 5'-phosphate, releasing the nucleobase queuine (q). Is required for salvage of queuine from exogenous queuosine (Q) that is imported and then converted to queuosine 5'-phosphate intracellularly. This is Queuosine 5'-phosphate N-glycosylase/hydrolase from Bos taurus (Bovine).